The sequence spans 482 residues: UDP-N-acetylmuramoyl-L-alanyl-D-glutamate--2,6-diaminopimelate ligase (482 aa).

The UDP-N-acetyl-alpha-D-muramoyl-L-alanyl-D-glutamate site is built by Leu28 and Ser30. Position 108–114 (108–114 (GTNGKTT)) interacts with ATP. Residues 150-151 (TT), Ser177, Gln183, and Arg185 contribute to the UDP-N-acetyl-alpha-D-muramoyl-L-alanyl-D-glutamate site. Residue Lys217 is modified to N6-carboxylysine. Residues Arg372, 396-399 (DNPR), Gly447, and Glu451 each bind meso-2,6-diaminopimelate. A Meso-diaminopimelate recognition motif motif is present at residues 396 to 399 (DNPR).

Belongs to the MurCDEF family. MurE subfamily. It depends on Mg(2+) as a cofactor. In terms of processing, carboxylation is probably crucial for Mg(2+) binding and, consequently, for the gamma-phosphate positioning of ATP.

The protein localises to the cytoplasm. The enzyme catalyses UDP-N-acetyl-alpha-D-muramoyl-L-alanyl-D-glutamate + meso-2,6-diaminopimelate + ATP = UDP-N-acetyl-alpha-D-muramoyl-L-alanyl-gamma-D-glutamyl-meso-2,6-diaminopimelate + ADP + phosphate + H(+). The protein operates within cell wall biogenesis; peptidoglycan biosynthesis. Functionally, catalyzes the addition of meso-diaminopimelic acid to the nucleotide precursor UDP-N-acetylmuramoyl-L-alanyl-D-glutamate (UMAG) in the biosynthesis of bacterial cell-wall peptidoglycan. The chain is UDP-N-acetylmuramoyl-L-alanyl-D-glutamate--2,6-diaminopimelate ligase from Aquifex aeolicus (strain VF5).